A 207-amino-acid polypeptide reads, in one-letter code: Hepatic lectin (207 aa).

Met-1 is subject to N-acetylmethionine. Residues Met-1–Arg-23 are Cytoplasmic-facing. Residues Ser-24–Ala-48 traverse the membrane as a helical; Signal-anchor for type II membrane protein segment. Topologically, residues Arg-49–Lys-207 are extracellular. The N-linked (GlcNAc...) asparagine glycan is linked to Asn-67. In terms of domain architecture, C-type lectin spans Pro-77–Lys-203. 3 disulfides stabilise this stretch: Cys-78/Cys-92, Cys-109/Cys-201, and Cys-179/Cys-193.

In terms of processing, some or all of the cysteines are involved in disulfide bonds.

Its subcellular location is the membrane. Hepatic lectin is a membrane receptor protein that recognizes and binds exposed N-acetylglucosamine moieties of plasma glycoproteins, thus mediating their clearance (from the circulation) and endocytosis. The polypeptide is Hepatic lectin (Gallus gallus (Chicken)).